A 471-amino-acid polypeptide reads, in one-letter code: PTS system mannitol-specific EIICB component (471 aa).

The Cytoplasmic portion of the chain corresponds to 1–29; sequence MTHTSENQAGFRVKIQRFGSYLSGMIMPN. Positions 18-342 constitute a PTS EIIC type-2 domain; sequence FGSYLSGMIM…FFVASIFLKS (325 aa). A helical transmembrane segment spans residues 30-51; that stretch reads IGAFIAWGIITALFIPTGWLPN. Residues 52–55 lie on the Extracellular side of the membrane; sequence ETFA. The chain crosses the membrane as a helical span at residues 56 to 76; it reads KLVGPMITYLLPLLIGYTGGK. At 77–139 the chain is on the cytoplasmic side; that stretch reads MIYDVRGGVV…QGFEMLVNNF (63 aa). The helical transmembrane segment at 140 to 161 threads the bilayer; the sequence is SAGIIGGLLTLAAFKGVGPVVS. Topologically, residues 162-170 are extracellular; that stretch reads AISKTLAAG. Residues 171–191 form a helical membrane-spanning segment; it reads VEKIVDLHLLPLANIFIEPGK. The Cytoplasmic segment spans residues 192–278; the sequence is VLFLNNAINH…VLMRPILILA (87 aa). Residues 279 to 298 traverse the membrane as a helical segment; sequence AIAGGVSGVLTFTIFDAGLV. The Extracellular portion of the chain corresponds to 299-318; sequence AVPSPGSIFALLAMTPKGNY. A helical membrane pass occupies residues 319–340; that stretch reads LGVLAGVLVATAVSFFVASIFL. At 341-471 the chain is on the cytoplasmic side; the sequence is KSAKNNEEDI…YDELIEMLKK (131 aa). In terms of domain architecture, PTS EIIB type-2 spans 383–471; sequence KKIVFACDAG…YDELIEMLKK (89 aa). C389 functions as the Phosphocysteine intermediate; for EIIB activity in the catalytic mechanism. C389 bears the Phosphocysteine; by EIIA mark.

Homodimer.

It is found in the cell membrane. It carries out the reaction D-mannitol(out) + N(pros)-phospho-L-histidyl-[protein] = D-mannitol 1-phosphate(in) + L-histidyl-[protein]. The phosphoenolpyruvate-dependent sugar phosphotransferase system (sugar PTS), a major carbohydrate active transport system, catalyzes the phosphorylation of incoming sugar substrates concomitantly with their translocation across the cell membrane. The enzyme II CmtAB PTS system is involved in D-mannitol transport. The protein is PTS system mannitol-specific EIICB component of Geobacillus stearothermophilus (Bacillus stearothermophilus).